Here is a 193-residue protein sequence, read N- to C-terminus: Putative manganese efflux pump MntP (193 aa).

The next 6 helical transmembrane spans lie at 3 to 23 (MYATLILALALSMDAFAASIC), 41 to 61 (LIFGLAEACTPLIGWSLGLYA), 65 to 85 (IIEWDHWVAFTLLFILGCRMI), 106 to 126 (IVLITTAIATSLDAMAIGIGL), 133 to 153 (IVHTAMAIGMMTMIMATLGML), and 169 to 189 (IGGLILIAIGFNILFEHLELF).

It belongs to the MntP (TC 9.B.29) family.

It localises to the cell inner membrane. In terms of biological role, probably functions as a manganese efflux pump. This Photorhabdus laumondii subsp. laumondii (strain DSM 15139 / CIP 105565 / TT01) (Photorhabdus luminescens subsp. laumondii) protein is Putative manganese efflux pump MntP.